Here is a 431-residue protein sequence, read N- to C-terminus: Glutamate-1-semialdehyde 2,1-aminomutase (431 aa).

N6-(pyridoxal phosphate)lysine is present on Lys-269.

The protein belongs to the class-III pyridoxal-phosphate-dependent aminotransferase family. HemL subfamily. Homodimer. Pyridoxal 5'-phosphate serves as cofactor.

The protein localises to the cytoplasm. It catalyses the reaction (S)-4-amino-5-oxopentanoate = 5-aminolevulinate. Its pathway is porphyrin-containing compound metabolism; protoporphyrin-IX biosynthesis; 5-aminolevulinate from L-glutamyl-tRNA(Glu): step 2/2. The protein is Glutamate-1-semialdehyde 2,1-aminomutase of Francisella tularensis subsp. tularensis (strain WY96-3418).